We begin with the raw amino-acid sequence, 334 residues long: Protein-methionine-sulfoxide reductase catalytic subunit MsrP (334 aa).

A signal peptide (tat-type signal) is located at residues 1–44 (MKKNQFLKESDVTAESVFFMKRRQVLKALGISATALSLPHAAHA). Mo-molybdopterin contacts are provided by residues N88, 91 to 92 (YE), C146, T181, N233, R238, and 249 to 251 (GIK).

Belongs to the MsrP family. In terms of assembly, heterodimer of a catalytic subunit (MsrP) and a heme-binding subunit (MsrQ). Mo-molybdopterin is required as a cofactor. Exported by the Tat system. Can also be exported by the Sec system.

Its subcellular location is the periplasm. It catalyses the reaction L-methionyl-[protein] + a quinone + H2O = L-methionyl-(S)-S-oxide-[protein] + a quinol. It carries out the reaction L-methionyl-[protein] + a quinone + H2O = L-methionyl-(R)-S-oxide-[protein] + a quinol. In terms of biological role, part of the MsrPQ system that repairs oxidized periplasmic proteins containing methionine sulfoxide residues (Met-O), using respiratory chain electrons. Thus protects these proteins from oxidative-stress damage caused by reactive species of oxygen and chlorine. MsrPQ is essential for the maintenance of envelope integrity under bleach stress, rescuing a wide series of structurally unrelated periplasmic proteins from methionine oxidation, including the primary periplasmic chaperone SurA and the lipoprotein Pal. The catalytic subunit MsrP is non-stereospecific, being able to reduce both (R-) and (S-) diastereoisomers of methionine sulfoxide. Can catalyze the reduction of a variety of substrates in vitro, including dimethyl sulfoxide, trimethylamine N-oxide, phenylmethyl sulfoxide and L-methionine sulfoxide. Cannot reduce cyclic N-oxides. Shows no activity as sulfite oxidase. This Escherichia coli (strain K12) protein is Protein-methionine-sulfoxide reductase catalytic subunit MsrP.